Consider the following 479-residue polypeptide: V-type ATP synthase beta chain (479 aa).

Positions 458-479 (EGDSEREAPKMDSPHEEISEKS) are disordered.

Belongs to the ATPase alpha/beta chains family.

Functionally, produces ATP from ADP in the presence of a proton gradient across the membrane. The V-type beta chain is a regulatory subunit. This Nitrosococcus oceani (strain ATCC 19707 / BCRC 17464 / JCM 30415 / NCIMB 11848 / C-107) protein is V-type ATP synthase beta chain.